We begin with the raw amino-acid sequence, 248 residues long: MFKRTALILRRCFQPTFIRPHHINVLENFKEADDLPNQGQAKFVDVSIHDPQHIRSALVSPMQRKFLQDLEQQQTVRIKWFKEGNQDELENMKNECRRLALEIIMAAKGGDIKKACKELAEKEKCKQIELKKKCKELEKKTKCAKKDPCKKKDPCKKKDPCKKKDPCKKKDPCKKKDPCKKKDPCKKKDPCKKKGGDLKKKCKKLAEKEKCKKLAKKEKMKKLQKKCKKMAQKEKCKKMAKKDKCKKK.

Residues 82-147 adopt a coiled-coil conformation; it reads KEGNQDELEN…EKKTKCAKKD (66 aa). The disordered stretch occupies residues 146 to 200; sequence KDPCKKKDPCKKKDPCKKKDPCKKKDPCKKKDPCKKKDPCKKKDPCKKKGGDLKK. 8 tandem repeats follow at residues 147 to 152, 153 to 158, 159 to 164, 165 to 170, 171 to 176, 177 to 182, 183 to 188, and 189 to 194. The 8 X 6 AA tandem repeat of D-P-C-K-K-K stretch occupies residues 147–194; it reads DPCKKKDPCKKKDPCKKKDPCKKKDPCKKKDPCKKKDPCKKKDPCKKK. A coiled-coil region spans residues 197–244; it reads DLKKKCKKLAEKEKCKKLAKKEKMKKLQKKCKKMAQKEKCKKMAKKDK.

As to expression, expression limited to post-meiotic male germ cells. Expressed in elongated spermatids during individualization and in finally elongated nuclei of spermatids. After completion of nuclear shaping it is no longer expressed in the sperm heads with the onset of individualization.

The protein resides in the nucleus. Its subcellular location is the mitochondrion. May be involved in the final steps of mitochondrial differentiation within the flagellum. The protein is Sperm-specific protein Don juan (dj) of Drosophila melanogaster (Fruit fly).